Reading from the N-terminus, the 55-residue chain is Spermatid nuclear transition protein 1 (55 aa).

The segment covering 1-42 has biased composition (basic residues); the sequence is MSTSRKLKTHGMRRGKNRAPHKGVKRGGSKRKYRKSVLKSRK. The segment at 1–55 is disordered; the sequence is MSTSRKLKTHGMRRGKNRAPHKGVKRGGSKRKYRKSVLKSRKRGDDASRNYRSHL. 2 positions are modified to phosphoserine: S36 and S40.

The protein belongs to the nuclear transition protein 1 family. As to expression, testis-specific.

The protein localises to the nucleus. It localises to the chromosome. In terms of biological role, plays a key role in the replacement of histones to protamine in the elongating spermatids of mammals. In condensing spermatids, loaded onto the nucleosomes, where it promotes the recruitment and processing of protamines, which are responsible for histone eviction. The histone H2AB1-H2BC1/TH2B dimer is required for loading of TNP1 onto chromatin. This is Spermatid nuclear transition protein 1 from Mus musculus (Mouse).